We begin with the raw amino-acid sequence, 628 residues long: 3-hydroxy-3-methylglutaryl-coenzyme A reductase 2 (628 aa).

2 helical membrane passes run 38 to 58 (PLYL…YFLL) and 78 to 98 (EIVA…FFGI). A linker region spans residues 99–212 (DFVQSLIIRP…HEKTVIVTTE (114 aa)). Asn-153 is a glycosylation site (N-linked (GlcNAc...) asparagine). The interval 213–628 (EDEEIIKSVV…SSKDMSNLSS (416 aa)) is catalytic. Glu-307 acts as the Charge relay system in catalysis. N-linked (GlcNAc...) asparagine glycosylation is present at Asn-371. Lys-439 serves as the catalytic Charge relay system. N-linked (GlcNAc...) asparagine glycosylation occurs at Asn-484. Asp-515 (charge relay system) is an active-site residue. His-613 functions as the Proton donor in the catalytic mechanism. 2 N-linked (GlcNAc...) asparagine glycosylation sites follow: Asn-617 and Asn-625.

Belongs to the HMG-CoA reductase family.

Its subcellular location is the endoplasmic reticulum membrane. The protein localises to the mitochondrion membrane. It is found in the plastid membrane. The enzyme catalyses (R)-mevalonate + 2 NADP(+) + CoA = (3S)-3-hydroxy-3-methylglutaryl-CoA + 2 NADPH + 2 H(+). It participates in metabolic intermediate biosynthesis; (R)-mevalonate biosynthesis; (R)-mevalonate from acetyl-CoA: step 3/3. Catalyzes the synthesis of mevalonate. The specific precursor of all isoprenoid compounds present in plants. The polypeptide is 3-hydroxy-3-methylglutaryl-coenzyme A reductase 2 (HMG2) (Gossypium hirsutum (Upland cotton)).